A 60-amino-acid chain; its full sequence is MKRQKRDKLQRAHTKGFNAALQGQSKENCPFEELNAREEWLGGWREGREAFTTNGMKAYI.

The protein belongs to the ribosome modulation factor family.

It is found in the cytoplasm. Its function is as follows. During stationary phase, converts 70S ribosomes to an inactive dimeric form (100S ribosomes). The protein is Ribosome modulation factor of Kangiella koreensis (strain DSM 16069 / JCM 12317 / KCTC 12182 / SW-125).